The sequence spans 277 residues: Caspase-3 (277 aa).

At M1 the chain carries N-acetylmethionine. Propeptides lie at residues 1–9 (MENNETSVD) and 10–28 (AKSIKNLETQTIHGSKSMD). N6-acetyllysine is present on K11. Phosphoserine is present on S26. Residues H121 and C163 contribute to the active site. At C163 the chain carries S-nitrosocysteine; in inhibited form.

Belongs to the peptidase C14A family. Heterotetramer that consists of two anti-parallel arranged heterodimers, each one formed by a 17 kDa (p17) and a 12 kDa (p12) subunit. Interacts with BIRC6/bruce. In terms of processing, cleavage by granzyme B, caspase-6, caspase-8 and caspase-10 generates the two active subunits. Additional processing of the propeptides is likely due to the autocatalytic activity of the activated protease. Active heterodimers between the small subunit of caspase-7 protease and the large subunit of caspase-3 also occur and vice versa. Post-translationally, S-nitrosylated on its catalytic site cysteine in unstimulated cell lines and denitrosylated upon activation of the Fas apoptotic pathway, associated with an increase in intracellular caspase activity. Fas therefore activates caspase-3 not only by inducing the cleavage of the caspase zymogen to its active subunits, but also by stimulating the denitrosylation of its active site thiol. Ubiquitinated by BIRC6; this activity is inhibited by DIABLO/SMAC.

The protein localises to the cytoplasm. It carries out the reaction Strict requirement for an Asp residue at positions P1 and P4. It has a preferred cleavage sequence of Asp-Xaa-Xaa-Asp-|- with a hydrophobic amino-acid residue at P2 and a hydrophilic amino-acid residue at P3, although Val or Ala are also accepted at this position.. Inhibited by BIRC6; following inhibition of BIRC6-caspase binding by DIABLO/SMAC, BIRC6 is subjected to caspase cleavage, leading to an increase in active caspases. Functionally, involved in the activation cascade of caspases responsible for apoptosis execution. At the onset of apoptosis, it proteolytically cleaves poly(ADP-ribose) polymerase PARP1 at a '216-Asp-|-Gly-217' bond. Cleaves and activates sterol regulatory element binding proteins (SREBPs) between the basic helix-loop-helix leucine zipper domain and the membrane attachment domain. Cleaves and activates caspase-6, -7 and -9 (CASP6, CASP7 and CASP9, respectively). Cleaves and inactivates interleukin-18 (IL18). Triggers cell adhesion in sympathetic neurons through RET cleavage. Cleaves IL-1 beta between an Asp and an Ala, releasing the mature cytokine which is involved in a variety of inflammatory processes. Cleaves and inhibits serine/threonine-protein kinase AKT1 in response to oxidative stress. Acts as an inhibitor of type I interferon production during virus-induced apoptosis by mediating cleavage of antiviral proteins CGAS, IRF3 and MAVS, thereby preventing cytokine overproduction. Also involved in pyroptosis by mediating cleavage and activation of gasdermin-E (GSDME). Cleaves XRCC4 and phospholipid scramblase proteins XKR4, XKR8 and XKR9, leading to promote phosphatidylserine exposure on apoptotic cell surface. Cleaves BIRC6 following inhibition of BIRC6-caspase binding by DIABLO/SMAC. The protein is Caspase-3 (CASP3) of Oryctolagus cuniculus (Rabbit).